Consider the following 411-residue polypeptide: Peptidase T (411 aa).

Histidine 78 provides a ligand contact to Zn(2+). The active site involves aspartate 80. Aspartate 140 is a binding site for Zn(2+). Glutamate 173 (proton acceptor) is an active-site residue. Zn(2+) contacts are provided by glutamate 174, aspartate 196, and histidine 379.

This sequence belongs to the peptidase M20B family. The cofactor is Zn(2+).

The protein resides in the cytoplasm. The catalysed reaction is Release of the N-terminal residue from a tripeptide.. Cleaves the N-terminal amino acid of tripeptides. The sequence is that of Peptidase T from Yersinia pestis bv. Antiqua (strain Antiqua).